The chain runs to 454 residues: CBL-interacting protein kinase 17 (454 aa).

Residues 13–268 (YEMGRTLGEG…MAGIKSHEWF (256 aa)) form the Protein kinase domain. ATP contacts are provided by residues 19–27 (LGEGNFGKV) and Lys-42. Catalysis depends on Asp-136, which acts as the Proton acceptor. Residues 154-183 (DFGLSALPQHLGNDGLLHTTCGSPNYIAPE) are activation loop. Residues 304 to 328 (KNSHQINAFQLIGMASSLDLSGFFE) form the NAF domain. The interval 334 to 363 (QRRIRFTSTHPPKDAFDKIESSATELGFQV) is PPI.

It belongs to the protein kinase superfamily. CAMK Ser/Thr protein kinase family. SNF1 subfamily. Mn(2+) is required as a cofactor.

The catalysed reaction is L-seryl-[protein] + ATP = O-phospho-L-seryl-[protein] + ADP + H(+). It catalyses the reaction L-threonyl-[protein] + ATP = O-phospho-L-threonyl-[protein] + ADP + H(+). Functionally, CIPK serine-threonine protein kinases interact with CBL proteins. Binding of a CBL protein to the regulatory NAF domain of CIPK protein lead to the activation of the kinase in a calcium-dependent manner. The polypeptide is CBL-interacting protein kinase 17 (CIPK17) (Oryza sativa subsp. japonica (Rice)).